Consider the following 327-residue polypeptide: Aldo-keto reductase family 1 member A1 (327 aa).

Residues 13 to 22 (GQKIPLIGLG), T23, W24, and D47 contribute to the NADP(+) site. Y52 (proton donor) is an active-site residue. Residues S164, N165, S213, L215, S217, K265, S266, V267, T268, R271, Q274, and N275 each contribute to the NADP(+) site.

Belongs to the aldo/keto reductase family.

Its subcellular location is the cytoplasm. The protein localises to the cytosol. The protein resides in the apical cell membrane. It carries out the reaction a primary alcohol + NADP(+) = an aldehyde + NADPH + H(+). It catalyses the reaction S-nitroso-CoA + NADPH + H(+) = sulfinamide-CoA + NADP(+). The enzyme catalyses S-nitrosoglutathione + NADPH + H(+) = S-(hydroxysulfenamide)glutathione + NADP(+). Catalyzes the NADPH-dependent reduction of a wide variety of carbonyl-containing compounds to their corresponding alcohols. Displays enzymatic activity towards endogenous metabolites such as aromatic and aliphatic aldehydes, ketones, monosaccharides and bile acids. Acts as an aldehyde-detoxification enzyme. Also acts as an inhibitor of protein S-nitrosylation by mediating degradation of S-nitroso-coenzyme A (S-nitroso-CoA), a cofactor required to S-nitrosylate proteins. Also acts as a S-nitroso-glutathione reductase by catalyzing the NADPH-dependent reduction of S-nitrosoglutathione. Displays no reductase activity towards retinoids. This chain is Aldo-keto reductase family 1 member A1 (akr1a1), found in Xenopus tropicalis (Western clawed frog).